We begin with the raw amino-acid sequence, 574 residues long: Desiccation/radiation resistance protein DR_1769 (574 aa).

The signal sequence occupies residues 1–33 (MPDPAARRFSLPPFPLAALALSVALLGAPASLA). The span at 400 to 438 (TAQTQARQAAAAASTSQQPRLPTLAQAPAPTPAPAQTTP) shows a compositional bias: low complexity. Positions 400–461 (TAQTQARQAA…APVPPVASPA (62 aa)) are disordered. A compositionally biased stretch (pro residues) spans 439-459 (RPQPTPAQPATPAAPVPPVAS).

Functionally, plays an important role in resistance to desiccation and radiation, maybe by protecting genome integrity under extreme conditions. The sequence is that of Desiccation/radiation resistance protein DR_1769 from Deinococcus radiodurans (strain ATCC 13939 / DSM 20539 / JCM 16871 / CCUG 27074 / LMG 4051 / NBRC 15346 / NCIMB 9279 / VKM B-1422 / R1).